We begin with the raw amino-acid sequence, 290 residues long: Nucleotide-binding protein BAV3158 (290 aa).

An ATP-binding site is contributed by Gly9–Ser16. Position 58–61 (Asp58–Ser61) interacts with GTP.

It belongs to the RapZ-like family.

In terms of biological role, displays ATPase and GTPase activities. This is Nucleotide-binding protein BAV3158 from Bordetella avium (strain 197N).